Consider the following 344-residue polypeptide: 4-dimethylallyltryptophan N-methyltransferase easF (344 aa).

The protein belongs to the methyltransferase superfamily. In terms of assembly, homodimer.

It catalyses the reaction 4-(3-methylbut-2-enyl)-L-tryptophan + S-adenosyl-L-methionine = 4-(3-methylbut-2-enyl)-L-abrine + S-adenosyl-L-homocysteine + H(+). Its pathway is alkaloid biosynthesis; ergot alkaloid biosynthesis. Functionally, 4-dimethylallyltryptophan N-methyltransferase; part of the gene cluster that mediates the biosynthesis of fungal ergot alkaloid. DmaW catalyzes the first step of ergot alkaloid biosynthesis by condensing dimethylallyl diphosphate (DMAP) and tryptophan to form 4-dimethylallyl-L-tryptophan. The second step is catalyzed by the methyltransferase easF that methylates 4-dimethylallyl-L-tryptophan in the presence of S-adenosyl-L-methionine, resulting in the formation of 4-dimethylallyl-L-abrine. The catalase easC and the FAD-dependent oxidoreductase easE then transform 4-dimethylallyl-L-abrine to chanoclavine-I which is further oxidized by easD in the presence of NAD(+), resulting in the formation of chanoclavine-I aldehyde. Agroclavine dehydrogenase easG then mediates the conversion of chanoclavine-I aldehyde to agroclavine via a non-enzymatic adduct reaction: the substrate is an iminium intermediate that is formed spontaneously from chanoclavine-I aldehyde in the presence of glutathione. The presence of easA is not required to complete this reaction. Further conversion of agroclavine to paspalic acid is a two-step process involving oxidation of agroclavine to elymoclavine and of elymoclavine to paspalic acid, the second step being performed by the elymoclavine oxidase cloA. Paspalic acid is then further converted to D-lysergic acid. Ergopeptines are assembled from D-lysergic acid and three different amino acids by the D-lysergyl-peptide-synthetases composed each of a monomudular and a trimodular nonribosomal peptide synthetase subunit. LpsB and lpsC encode the monomodular subunits responsible for D-lysergic acid activation and incorporation into the ergopeptine backbone. LpsA1 and A2 subunits encode the trimodular nonribosomal peptide synthetase assembling the tripeptide portion of ergopeptines. LpsA1 is responsible for formation of the major ergopeptine, ergotamine, and lpsA2 for alpha-ergocryptine, the minor ergopeptine of the total alkaloid mixture elaborated by C.purpurea. D-lysergyl-tripeptides are assembled by the nonribosomal peptide synthetases and released as N-(D-lysergyl-aminoacyl)-lactams. Cyclolization of the D-lysergyl-tripeptides is performed by the Fe(2+)/2-ketoglutarate-dependent dioxygenase easH which introduces a hydroxyl group into N-(D-lysergyl-aminoacyl)-lactam at alpha-C of the aminoacyl residue followed by spontaneous condensation with the terminal lactam carbonyl group. This chain is 4-dimethylallyltryptophan N-methyltransferase easF, found in Claviceps purpurea (Ergot fungus).